Consider the following 648-residue polypeptide: Dystrotelin (648 aa).

The ZZ-type zinc finger occupies 223 to 279; it reads QHRVHCHACKAFPITGLRYRCLKCLNVHLCQSCFLTERRSRKHKPSHSVLEYCTQPS. 8 residues coordinate Zn(2+): C228, C231, C243, C246, C252, C255, H265, and H269. The stretch at 367-446 forms a coiled coil; the sequence is QRETAELQKD…LDTVRHLLSL (80 aa). Polar residues predominate over residues 455–474; the sequence is SHSNLQLEQDGSINENNWTQ. Disordered regions lie at residues 455–509 and 536–557; these read SHSN…DTLY and QREEEELQEEEEGLHEKEEGLP. Basic and acidic residues predominate over residues 479–502; the sequence is KPHESSSTEHEVEERGTRQERRFE. Over residues 538–548 the composition is skewed to acidic residues; sequence EEEELQEEEEG.

It localises to the cell membrane. The sequence is that of Dystrotelin (dytn) from Danio rerio (Zebrafish).